The sequence spans 366 residues: Chorismate synthase (366 aa).

NADP(+) is bound by residues R48 and R54. FMN is bound by residues 125-127, 238-239, G278, 293-297, and R319; these read RSS, NA, and KPTSS.

It belongs to the chorismate synthase family. As to quaternary structure, homotetramer. Requires FMNH2 as cofactor.

The catalysed reaction is 5-O-(1-carboxyvinyl)-3-phosphoshikimate = chorismate + phosphate. It functions in the pathway metabolic intermediate biosynthesis; chorismate biosynthesis; chorismate from D-erythrose 4-phosphate and phosphoenolpyruvate: step 7/7. In terms of biological role, catalyzes the anti-1,4-elimination of the C-3 phosphate and the C-6 proR hydrogen from 5-enolpyruvylshikimate-3-phosphate (EPSP) to yield chorismate, which is the branch point compound that serves as the starting substrate for the three terminal pathways of aromatic amino acid biosynthesis. This reaction introduces a second double bond into the aromatic ring system. The polypeptide is Chorismate synthase (Cellvibrio japonicus (strain Ueda107) (Pseudomonas fluorescens subsp. cellulosa)).